A 507-amino-acid polypeptide reads, in one-letter code: GMP synthase [glutamine-hydrolyzing] 1 (507 aa).

A Glutamine amidotransferase type-1 domain is found at 4–193; sequence KIIILDFGSQ…VVDVCGCKQD (190 aa). C79 serves as the catalytic Nucleophile. Active-site residues include H167 and E169. Residues 194–382 enclose the GMPS ATP-PPase domain; it reads WSPASFIEST…LGMPEHLITR (189 aa). ATP is bound at residue 221 to 227; that stretch reads SGGVDSS.

Homodimer.

It catalyses the reaction XMP + L-glutamine + ATP + H2O = GMP + L-glutamate + AMP + diphosphate + 2 H(+). It participates in purine metabolism; GMP biosynthesis; GMP from XMP (L-Gln route): step 1/1. In terms of biological role, catalyzes the synthesis of GMP from XMP. The chain is GMP synthase [glutamine-hydrolyzing] 1 (guaA1) from Bacteroides thetaiotaomicron (strain ATCC 29148 / DSM 2079 / JCM 5827 / CCUG 10774 / NCTC 10582 / VPI-5482 / E50).